A 322-amino-acid polypeptide reads, in one-letter code: uncharacterized protein (322 aa).

The Radical SAM core domain occupies 34-286 (KFKQKIFKIP…QRLSKDKVPE (253 aa)). Residues C50, C58, and C61 each contribute to the [4Fe-4S] cluster site.

Belongs to the radical SAM superfamily. [4Fe-4S] cluster serves as cofactor.

This is an uncharacterized protein from Methanocaldococcus jannaschii (strain ATCC 43067 / DSM 2661 / JAL-1 / JCM 10045 / NBRC 100440) (Methanococcus jannaschii).